An 802-amino-acid chain; its full sequence is MAAEALAAEAVASRLERQEEDIRWLWSEVERLRDEQLNAPYSCQAEGPCLTREVAQLRAENCDLRHRLCSLRLCLAEERSRQATLESAELEAAQEAGAQPPPSQSQDKDMKKKKMKESEADSEVKHQPIFIKERLKLFEILKKDHQLLLAIYGKKGDTSNIITVRVADGQTVQGEVWKTTPYQVAAEISQELAESTVIAKVNGELWDLDRPLEGDSSLELLTFDNEEAQAVYWHSSAHILGEAMELYYGGHLCYGPPIENGFYYDMFIEDRAVSSTELSALENICKAIIKEKQPFERLEVSKEILLEMFKYNKFKCRILNEKVNTATTTVYRCGPLIDLCKGPHVRHTGKIKTIKIFKNSSTYWEGNPEMETLQRIYGISFPDNKMMRDWEKFQEEAKNRDHRKIGKEQELFFFHDLSPGSCFFLPRGAFIYNTLTDFIREEYHKRDFTEVLSPNMYNSKLWEASGHWQHYSENMFTFEIEKDTFALKPMNCPGHCLMFAHRPRSWREMPIRFADFGVLHRNELSGTLSGLTRVRRFQQDDAHIFCTVEQIEEEIKGCLQFLQSVYSTFGFSFQLNLSTRPENFLGEIEMWNEAEKQLQNSLMDFGEPWKMNPGDGAFYGPKIDIKIKDAIGRYHQCATIQLDFQLPIRFNLTYVSKDGDDKKRPVIIHRAILGSVERMIAILSENYGGKWPFWLSPRQVMVIPVGPTCEKYALQVSSEFFEEGFMADVDLDHSCTLNKKIRNAQLAQYNFILVVGEKEKIDNAVNVRTRDNKIHGEILVTSAIDKLKNLRKTRTLNAEEAF.

Ala-2 carries the N-acetylalanine modification. 2 coiled-coil regions span residues Ala-3–Arg-23 and Ala-76–Ala-96. Residues Glu-86–Ala-98 are compositionally biased toward low complexity. A disordered region spans residues Glu-86–Glu-123. Residues Gln-106–Glu-123 are compositionally biased toward basic and acidic residues. In terms of domain architecture, TGS spans Asp-157–Thr-222. At Ser-453 the chain carries Phosphoserine. Residues Lys-786–Lys-792 carry the Nuclear localization signal motif.

The protein belongs to the class-II aminoacyl-tRNA synthetase family. As to quaternary structure, may be a component of the multisynthetase complex (MSC), a large multi-subunit complex which contains at least eight different aminoacyl-tRNA synthetases plus three auxillary subunits AIMP1, AIMP2 and EEF1E1. Interacts with the MSC components EPRS1, AIMP1, AIMP2 and KARS1.

It is found in the cytoplasm. Its subcellular location is the nucleus. The catalysed reaction is tRNA(Thr) + L-threonine + ATP = L-threonyl-tRNA(Thr) + AMP + diphosphate + H(+). Functionally, catalyzes the attachment of threonine to tRNA(Thr) in a two-step reaction: threonine is first activated by ATP to form Thr-AMP and then transferred to the acceptor end of tRNA(Thr). Also edits incorrectly charged tRNA(Thr) via its editing domain, at the post-transfer stage. The protein is Threonine--tRNA ligase 2, cytoplasmic of Homo sapiens (Human).